The following is a 320-amino-acid chain: MTPRHLLAAGDLSRDDAIAILDDADRFAQALVGREVKKLPTLRGRTVVTMFYENSTRTRVSFEVAGKWMSADLINVSASGSSVSKGESLRDTALTLRAAGADALIIRHPASGAARLFADWTAGQSDGGPSVINAGDGTHEHPTQALLDALTIRQRLGGIEGRRVVIVGDILHSRVARSNVTLLHTLGAEVVLVAPPTLLPVGVADWPVTVSHDLDAELPAADAVLMLRVQAERMNGGFFPSVREYSTLYGLSDRRQAMLGGHAVVLHPGPMLRGMEIASSVADSSQSAVLQQVSNGVHIRMAVLFHVLVGLESAGEEGAA.

Carbamoyl phosphate is bound by residues R57 and T58. L-aspartate is bound at residue K85. 3 residues coordinate carbamoyl phosphate: R107, H141, and Q144. L-aspartate-binding residues include R174 and R228. G269 and P270 together coordinate carbamoyl phosphate.

It belongs to the aspartate/ornithine carbamoyltransferase superfamily. ATCase family. Heterododecamer (2C3:3R2) of six catalytic PyrB chains organized as two trimers (C3), and six regulatory PyrI chains organized as three dimers (R2).

The catalysed reaction is carbamoyl phosphate + L-aspartate = N-carbamoyl-L-aspartate + phosphate + H(+). It participates in pyrimidine metabolism; UMP biosynthesis via de novo pathway; (S)-dihydroorotate from bicarbonate: step 2/3. Functionally, catalyzes the condensation of carbamoyl phosphate and aspartate to form carbamoyl aspartate and inorganic phosphate, the committed step in the de novo pyrimidine nucleotide biosynthesis pathway. The chain is Aspartate carbamoyltransferase catalytic subunit from Mycobacterium ulcerans (strain Agy99).